We begin with the raw amino-acid sequence, 568 residues long: Zinc finger protein 76 (568 aa).

A Glycyl lysine isopeptide (Lys-Gly) (interchain with G-Cter in SUMO2) cross-link involves residue lysine 24. A run of 3 repeats spans residues 34–45 (IQLEDGTTAYIH), 62–73 (VQLEDGSMAYIH), and 88–99 (VQLEDGSTAYIH). Residues 34–99 (IQLEDGTTAY…LEDGSTAYIH (66 aa)) form a 3 X 12 AA approximate repeats region. C2H2-type zinc fingers lie at residues 165–189 (FRCG…ERAH), 195–219 (YRCD…VRTH), 225–249 (YKCP…VRTH), 255–279 (FRCP…VRTH), 285–309 (YTCP…VRIH), 315–339 (YVCT…HVVH), and 345–368 (YTCS…RSAH). The segment at 365–401 (RSAHGELEATEESEQALYEQQQLEAASAAEESPSPKP) is disordered. The segment covering 379 to 396 (QALYEQQQLEAASAAEES) has biased composition (low complexity).

The protein belongs to the krueppel C2H2-type zinc-finger protein family.

It is found in the nucleus. May be involved in transcriptional regulation. The chain is Zinc finger protein 76 (Znf76) from Rattus norvegicus (Rat).